Reading from the N-terminus, the 248-residue chain is Glutathione S-transferase omega-2 (248 aa).

The GST N-terminal domain occupies 22–101 (GVIRIYSMRF…YLDDVFPGRK (80 aa)). Cysteine 32 serves as the catalytic Nucleophile. Residues lysine 59, valine 72, and 85–86 (ES) contribute to the glutathione site. In terms of domain architecture, GST C-terminal spans 106–231 (DPYERARQKM…IFLGFLNLYF (126 aa)).

Belongs to the GST superfamily. Omega family.

It carries out the reaction RX + glutathione = an S-substituted glutathione + a halide anion + H(+). It catalyses the reaction L-dehydroascorbate + 2 glutathione = glutathione disulfide + L-ascorbate. The enzyme catalyses methylarsonate + 2 glutathione + H(+) = methylarsonous acid + glutathione disulfide + H2O. Functionally, exhibits glutathione-dependent thiol transferase activity. Has high dehydroascorbate reductase activity and may contribute to the recycling of ascorbic acid. Participates in the biotransformation of inorganic arsenic and reduces monomethylarsonic acid (MMA). This Rattus norvegicus (Rat) protein is Glutathione S-transferase omega-2 (Gsto2).